The following is a 650-amino-acid chain: MIEENKHFEKKMQEYDASQIQVLEGLEAVRMRPGMYIGSTAKEGLHHLVWEIVDNSIDEALAGFASHIKVFIEADNSITVVDDGRGIPVDIQAKTGRPAVETVFTVLHAGGKFGGGGYKVSGGLHGVGSSVVNALSTQLDVRVYKNGQIHYQEFKRGAVVADLEVIGTTDVTGTTVHFTPDPEIFTETTQFDYSVLAKRIQELAFLNRGLKISITDKRSGMEQEEHFLYEGGIGSYVEFLNDKKDVIFETPIYTDGELEGIAVEVAMQYTTSYQETVMSFANNIHTHEGGTHEQGFRAALTRVINDYAKKNKILKENEDNLTGEDVREGLTAVISVKHPNPQFEGQTKTKLGNSEVVKITNRLFSEAFQRFLLENPQVARKIVEKGILASKARIAAKRAREVTRKKSGLEISNLPGKLADCSSNDANQNELFIVEGDSAGGSAKSGRNREFQAILPIRGKILNVEKATMDKILANEEIRSLFTAMGTGFGADFDVSKARYQKLVIMTDADVDGAHIRTLLLTLIYRFMRPVLEAGYVYIAQPPIYGVKVGSEIKEYIQPGIDQEDQLKTALEKYSIGRSKPTVQRYKGLGEMDDHQLWETTMDPENRLMARVTVDDAAEADKVFDMLMGDRVEPRRDFIEENAVYSTLDI.

The region spanning 429–543 (NELFIVEGDS…AGYVYIAQPP (115 aa)) is the Toprim domain. Residues Glu435, Asp508, and Asp510 each contribute to the Mg(2+) site.

This sequence belongs to the type II topoisomerase GyrB family. Heterotetramer, composed of two GyrA and two GyrB chains. In the heterotetramer, GyrA contains the active site tyrosine that forms a transient covalent intermediate with DNA, while GyrB binds cofactors and catalyzes ATP hydrolysis. It depends on Mg(2+) as a cofactor. Requires Mn(2+) as cofactor. Ca(2+) is required as a cofactor.

It localises to the cytoplasm. The enzyme catalyses ATP-dependent breakage, passage and rejoining of double-stranded DNA.. A type II topoisomerase that negatively supercoils closed circular double-stranded (ds) DNA in an ATP-dependent manner to modulate DNA topology and maintain chromosomes in an underwound state. Negative supercoiling favors strand separation, and DNA replication, transcription, recombination and repair, all of which involve strand separation. Also able to catalyze the interconversion of other topological isomers of dsDNA rings, including catenanes and knotted rings. Type II topoisomerases break and join 2 DNA strands simultaneously in an ATP-dependent manner. The sequence is that of DNA gyrase subunit B from Streptococcus pyogenes serotype M1.